Here is a 159-residue protein sequence, read N- to C-terminus: Keratin-associated protein 11-1 (159 aa).

4 repeat units span residues 107-116, 117-126, 127-136, and 137-146. The 4 X 10 AA approximate repeats stretch occupies residues 107–146; it reads CQPLSGVSTVCKPVRSISTVCQPVGGVSTICQPTCGVSRT.

It belongs to the PMG family. As to expression, wool.

Its function is as follows. In the wool cortex, wool keratin intermediate filaments are embedded in an interfilamentous matrix, consisting of wool keratin-associated proteins (KRTAP), which are essential for the formation of a rigid and resistant wool shaft through their extensive disulfide bond cross-linking with abundant cysteine residues of wool keratins. The matrix proteins include the high-sulfur and high-glycine-tyrosine keratins. This chain is Keratin-associated protein 11-1 (KRTAP11-1), found in Capra hircus (Goat).